A 497-amino-acid polypeptide reads, in one-letter code: Glycerol kinase (497 aa).

ADP is bound at residue threonine 12. The ATP site is built by threonine 12, threonine 13, and serine 14. Threonine 12 provides a ligand contact to sn-glycerol 3-phosphate. Arginine 16 serves as a coordination point for ADP. Positions 82, 83, 134, and 243 each coordinate sn-glycerol 3-phosphate. Residues arginine 82, glutamate 83, tyrosine 134, aspartate 243, and glutamine 244 each contribute to the glycerol site. ADP contacts are provided by threonine 265 and glycine 308. ATP-binding residues include threonine 265, glycine 308, glutamine 312, and glycine 409. Residues glycine 409 and asparagine 413 each contribute to the ADP site.

The protein belongs to the FGGY kinase family.

The enzyme catalyses glycerol + ATP = sn-glycerol 3-phosphate + ADP + H(+). Its pathway is polyol metabolism; glycerol degradation via glycerol kinase pathway; sn-glycerol 3-phosphate from glycerol: step 1/1. With respect to regulation, inhibited by fructose 1,6-bisphosphate (FBP). Its function is as follows. Key enzyme in the regulation of glycerol uptake and metabolism. Catalyzes the phosphorylation of glycerol to yield sn-glycerol 3-phosphate. The polypeptide is Glycerol kinase (Solidesulfovibrio magneticus (strain ATCC 700980 / DSM 13731 / RS-1) (Desulfovibrio magneticus)).